A 521-amino-acid polypeptide reads, in one-letter code: Protein NRT1/ PTR FAMILY 4.2 (521 aa).

The next 12 membrane-spanning stretches (helical) occupy residues 30-50 (IVCV…FNFV), 65-85 (ANMV…GGFI), 89-109 (FVTH…GLIL), 133-153 (AILF…KASL), 172-192 (FFDW…TVVL), 204-224 (FNIS…GLPF), 297-317 (FLGL…VAQL), 338-358 (IPVP…IPLY), 381-401 (IGLG…VEAK), 413-433 (ISVL…MLTL), 451-471 (ISTA…TTLV), and 498-518 (LFYV…IFWA).

Belongs to the major facilitator superfamily. Proton-dependent oligopeptide transporter (POT/PTR) (TC 2.A.17) family. As to expression, expressed in siliques.

The protein localises to the membrane. Functionally, involved in abscisic acid transport. This chain is Protein NRT1/ PTR FAMILY 4.2 (NPF4.2), found in Arabidopsis thaliana (Mouse-ear cress).